The primary structure comprises 37 residues: Large ribosomal subunit protein bL36c (37 aa).

Belongs to the bacterial ribosomal protein bL36 family.

Its subcellular location is the plastid. It is found in the chloroplast. This Coffea arabica (Arabian coffee) protein is Large ribosomal subunit protein bL36c.